Reading from the N-terminus, the 111-residue chain is Ferredoxin-thioredoxin reductase, catalytic chain (111 aa).

Residue cysteine 52 coordinates [4Fe-4S] cluster. Cysteine 54 (nucleophile) is an active-site residue. A disulfide bridge connects residues cysteine 54 and cysteine 84. Positions 71, 73, and 82 each coordinate [4Fe-4S] cluster.

It belongs to the ferredoxin thioredoxin reductase beta subunit family. In terms of assembly, heterodimer of subunit A (variable subunit) and subunit B (catalytic subunit). Heterodimeric FTR forms a complex with ferredoxin and thioredoxin. The cofactor is [4Fe-4S] cluster.

It is found in the plastid. The protein localises to the chloroplast. The enzyme catalyses [thioredoxin]-disulfide + 2 reduced [2Fe-2S]-[ferredoxin] + 2 H(+) = [thioredoxin]-dithiol + 2 oxidized [2Fe-2S]-[ferredoxin]. Functionally, catalytic subunit of the ferredoxin-thioredoxin reductase (FTR), which catalyzes the two-electron reduction of thioredoxins by the electrons provided by reduced ferredoxin. The sequence is that of Ferredoxin-thioredoxin reductase, catalytic chain (ftrB) from Cyanidium caldarium (Red alga).